A 286-amino-acid polypeptide reads, in one-letter code: Glycine--tRNA ligase alpha subunit (286 aa).

This sequence belongs to the class-II aminoacyl-tRNA synthetase family. As to quaternary structure, tetramer of two alpha and two beta subunits.

It localises to the cytoplasm. The enzyme catalyses tRNA(Gly) + glycine + ATP = glycyl-tRNA(Gly) + AMP + diphosphate. The protein is Glycine--tRNA ligase alpha subunit of Thermotoga neapolitana (strain ATCC 49049 / DSM 4359 / NBRC 107923 / NS-E).